Consider the following 436-residue polypeptide: Trigger factor (436 aa).

The PPIase FKBP-type domain occupies 163 to 248; it reads GDRVTLDFAG…VKEVAEGVLP (86 aa).

Belongs to the FKBP-type PPIase family. Tig subfamily.

The protein localises to the cytoplasm. The catalysed reaction is [protein]-peptidylproline (omega=180) = [protein]-peptidylproline (omega=0). Involved in protein export. Acts as a chaperone by maintaining the newly synthesized protein in an open conformation. Functions as a peptidyl-prolyl cis-trans isomerase. In Bordetella petrii (strain ATCC BAA-461 / DSM 12804 / CCUG 43448), this protein is Trigger factor.